The primary structure comprises 1480 residues: UDP-N-acetylglucosamine--peptide N-acetylglucosaminyltransferase (1480 aa).

4 TPR repeats span residues 38–71 (IFLYAIQGEISFKQKDWIQAFAAYEKAVAESKQK), 113–146 (VQVLAQLALLYLMCERYSEAEKLLSSIVESSTSN), 176–209 (ATILNNLAICNSKLGNHTLAFDQFQQALDIIKDP), and 288–321 (STICYNIGKLELTLGNLDRSVNHFKKSIEYQPSF). Over residues 468–485 (PQEKESPKSDKIASEKPL) the composition is skewed to basic and acidic residues. Positions 468–497 (PQEKESPKSDKIASEKPLVESNPGRSRTPS) are disordered. TPR repeat units follow at residues 613 to 646 (YEPFYNLGNILKADEENKKALQYYSRAIELNPRF) and 648 to 680 (DGYLARGVLYAELHRFETAYLDFSKCIELDPDN). The tract at residues 1093–1128 (LSLDGSDATSSSVDSGIGSRTHSEAPIGGGDKDEGA) is disordered. Residues 1099-1112 (DATSSSVDSGIGSR) show a composition bias toward polar residues. Residues Gln-1269, Lys-1272, 1333 to 1336 (HIRR), 1351 to 1353 (GST), and Asp-1357 contribute to the UDP site.

The protein belongs to the glycosyltransferase 41 family. O-GlcNAc transferase subfamily.

It localises to the cytoplasm. It is found in the nucleus. The enzyme catalyses L-seryl-[protein] + UDP-N-acetyl-alpha-D-glucosamine = 3-O-(N-acetyl-beta-D-glucosaminyl)-L-seryl-[protein] + UDP + H(+). The catalysed reaction is L-threonyl-[protein] + UDP-N-acetyl-alpha-D-glucosamine = 3-O-(N-acetyl-beta-D-glucosaminyl)-L-threonyl-[protein] + UDP + H(+). It functions in the pathway protein modification; protein glycosylation. Catalyzes the transfer of a single N-acetylglucosamine from UDP-GlcNAc to a serine or threonine residue in cytoplasmic and nuclear proteins resulting in their modification with a beta-linked N-acetylglucosamine (O-GlcNAc). The polypeptide is UDP-N-acetylglucosamine--peptide N-acetylglucosaminyltransferase (Giardia intestinalis (strain ATCC 50803 / WB clone C6) (Giardia lamblia)).